A 347-amino-acid polypeptide reads, in one-letter code: GMP reductase (347 aa).

108-131 (ADFEKTVQILALDPALNFVCIDVA) contacts NADP(+). Residues Gly-181 and Gly-183 each contribute to the K(+) site. The active-site Thioimidate intermediate is the Cys-186. NADP(+) is bound at residue 216 to 239 (IVSDGGCTMPGDVAKAFGGGADFV).

The protein belongs to the IMPDH/GMPR family. GuaC type 1 subfamily. As to quaternary structure, homotetramer.

It catalyses the reaction IMP + NH4(+) + NADP(+) = GMP + NADPH + 2 H(+). Its function is as follows. Catalyzes the irreversible NADPH-dependent deamination of GMP to IMP. It functions in the conversion of nucleobase, nucleoside and nucleotide derivatives of G to A nucleotides, and in maintaining the intracellular balance of A and G nucleotides. The polypeptide is GMP reductase (Salmonella paratyphi B (strain ATCC BAA-1250 / SPB7)).